A 212-amino-acid polypeptide reads, in one-letter code: uncharacterized protein (212 aa).

The helical transmembrane segment at 5–25 (IFIILIAVLLIGVNIKKIAAA) threads the bilayer.

The protein resides in the membrane. This is an uncharacterized protein from Borreliella burgdorferi (strain ATCC 35210 / DSM 4680 / CIP 102532 / B31) (Borrelia burgdorferi).